Here is a 446-residue protein sequence, read N- to C-terminus: tRNA-2-methylthio-N(6)-dimethylallyladenosine synthase (446 aa).

The region spanning 3-124 (KKLYIKTYGC…LPELISKVVR (122 aa)) is the MTTase N-terminal domain. [4Fe-4S] cluster-binding residues include C12, C48, C87, C162, C166, and C169. The 233-residue stretch at 148–380 (YPQGASSFIS…QKELAAQQLA (233 aa)) folds into the Radical SAM core domain. The 64-residue stretch at 383-446 (ESCIGSTMKV…LNSLSGEIYR (64 aa)) folds into the TRAM domain.

Belongs to the methylthiotransferase family. MiaB subfamily. In terms of assembly, monomer. [4Fe-4S] cluster is required as a cofactor.

The protein localises to the cytoplasm. It carries out the reaction N(6)-dimethylallyladenosine(37) in tRNA + (sulfur carrier)-SH + AH2 + 2 S-adenosyl-L-methionine = 2-methylsulfanyl-N(6)-dimethylallyladenosine(37) in tRNA + (sulfur carrier)-H + 5'-deoxyadenosine + L-methionine + A + S-adenosyl-L-homocysteine + 2 H(+). Its function is as follows. Catalyzes the methylthiolation of N6-(dimethylallyl)adenosine (i(6)A), leading to the formation of 2-methylthio-N6-(dimethylallyl)adenosine (ms(2)i(6)A) at position 37 in tRNAs that read codons beginning with uridine. The protein is tRNA-2-methylthio-N(6)-dimethylallyladenosine synthase of Rickettsia bellii (strain RML369-C).